The sequence spans 400 residues: Spaetzle-processing enzyme (400 aa).

The signal sequence occupies residues 1 to 27; the sequence is MASTERNFLLLSLVVSALSGLVHRSDA. In terms of domain architecture, Clip spans 34-94; sequence SCTPQQSDER…GLVNRILVCC (61 aa). 6 disulfide bridges follow: cysteine 35-cysteine 93, cysteine 46-cysteine 77, cysteine 52-cysteine 94, cysteine 127-cysteine 269, cysteine 166-cysteine 182, and cysteine 211-cysteine 221. A Peptidase S1 domain is found at 135-399; it reads IFGGTNTTLW…FIDWIKQKLE (265 aa). Residue asparagine 140 is glycosylated (N-linked (GlcNAc...) asparagine). Residue histidine 181 is the Charge relay system of the active site. 4 residues coordinate Ca(2+): glutamate 202, aspartate 204, threonine 207, and aspartate 210. The active-site Charge relay system is aspartate 249. The N-linked (GlcNAc...) asparagine glycan is linked to asparagine 311. 2 disulfide bridges follow: cysteine 315–cysteine 332 and cysteine 342–cysteine 375. The active-site Charge relay system is the serine 346.

It belongs to the peptidase S1 family. CLIP subfamily. In the active form, heterodimer of a light chain and a heavy chain; disulfide-linked. In terms of processing, proteolytically cleaved in response to Gram-negative bacterial or fungal infection; processing is likely to result in its activation. Cleavage produces a light chain containing the CLIP domain and a catalytic heavy chain which remain covalently associated through an interchain disulfide bond.

Its subcellular location is the secreted. Functionally, endopeptidase which plays a key role in innate immunity by cleaving Tl ligand spz and thereby activating the Toll pathway in response to fungal and Gram-positive bacterial infections. Acts downstream of pathogen recognition receptors PGRP-SA and GNBP1 and protease grass in response to Gram-positive bacterial infection. Acts downstream of protease psh in response to fungal infection. The sequence is that of Spaetzle-processing enzyme from Drosophila melanogaster (Fruit fly).